We begin with the raw amino-acid sequence, 126 residues long: uncharacterized protein (126 aa).

Residues 3-23 traverse the membrane as a helical segment; it reads NMIVLIIFAAFIIYMIASYVY. Residues 39 to 123 enclose the Rhodanese domain; that stretch reads GYRKAQLIDV…GFKKWGGKIK (85 aa).

It localises to the cell membrane. This is an uncharacterized protein from Bacillus subtilis (strain 168).